A 268-amino-acid chain; its full sequence is tRNA pseudouridine synthase A (268 aa).

The active-site Nucleophile is Asp52. Tyr113 contacts substrate.

It belongs to the tRNA pseudouridine synthase TruA family. In terms of assembly, homodimer.

The enzyme catalyses uridine(38/39/40) in tRNA = pseudouridine(38/39/40) in tRNA. In terms of biological role, formation of pseudouridine at positions 38, 39 and 40 in the anticodon stem and loop of transfer RNAs. This is tRNA pseudouridine synthase A from Chlamydia felis (strain Fe/C-56) (Chlamydophila felis).